We begin with the raw amino-acid sequence, 346 residues long: MQQEKELVKQKAKELLLDLLSIYTPSKNETNATKFFEKISNEFNLKLEILPDSNSFILGEGEILLASHVDTVPGYIEPKIENEVIYGRGAVDAKGPLISMIIAAWLLNEKGIKVMVSGLADEESTSIGAKELTLKNFNFKHIIVGEPSNGTDIVVEYRGSIQLDIMCESTPEHSSSAKSNLIVDISKKIIEVYKQPENYDKPSIVPTIIRAGESYNVTPAKLYLHFDVRYAINNKRDDLINEIKDKFQECGLKIVDETPPVKVSINNPVVKSLTRALLKQNIKPRLVRKAGTSDMNILQKITTSIATYGPGNSMLEHTNQEKITLDEIYIGVKTYMLAIEELWQKS.

Residue histidine 68 participates in Zn(2+) binding. The active site involves aspartate 70. A Zn(2+)-binding site is contributed by aspartate 92. Glutamate 122 functions as the Proton acceptor in the catalytic mechanism. Residues glutamate 123, glutamate 146, and histidine 317 each coordinate Zn(2+).

Belongs to the peptidase M20A family. LysK subfamily. The cofactor is Zn(2+). Co(2+) serves as cofactor.

The protein localises to the cytoplasm. The enzyme catalyses [amino-group carrier protein]-C-terminal-gamma-(L-lysyl)-L-glutamate + H2O = [amino-group carrier protein]-C-terminal-L-glutamate + L-lysine. The catalysed reaction is [amino-group carrier protein]-C-terminal-gamma-(L-ornithyl)-L-glutamate + H2O = [amino-group carrier protein]-C-terminal-L-glutamate + L-ornithine. It participates in amino-acid biosynthesis; L-lysine biosynthesis via AAA pathway; L-lysine from L-alpha-aminoadipate (Thermus route): step 5/5. Its pathway is amino-acid biosynthesis; L-arginine biosynthesis. In terms of biological role, catalyzes the release of L-lysine from [LysW]-gamma-L-lysine and the release of L-ornithine from [LysW]-L-ornithine. This is [LysW]-lysine/[LysW]-ornithine hydrolase from Saccharolobus islandicus (strain Y.G.57.14 / Yellowstone #1) (Sulfolobus islandicus).